A 369-amino-acid polypeptide reads, in one-letter code: Phosphoribosyl pyrophosphate synthase-associated protein 2 (369 aa).

Met-1 carries the N-acetylmethionine modification. Phosphoserine is present on residues Ser-219, Ser-227, and Ser-233.

Belongs to the ribose-phosphate pyrophosphokinase family. Binds to PRPS1 and PRPS2.

Functionally, seems to play a negative regulatory role in 5-phosphoribose 1-diphosphate synthesis. This Mus musculus (Mouse) protein is Phosphoribosyl pyrophosphate synthase-associated protein 2 (Prpsap2).